The sequence spans 585 residues: Glucose oxidase-like protein fsoC (585 aa).

A104 lines the FAD pocket. The Proton donor role is filled by H521. Residue H564 is the Proton acceptor of the active site.

This sequence belongs to the GMC oxidoreductase family. Monomer. It depends on FAD as a cofactor.

Glucose oxidase-like protein; part of the gene cluster that mediates the biosynthesis of the enfumafungin-type antibiotic fuscoatroside. Four enzymes are sufficient to produce fuscoatroside: the terpene cyclase-glycosyl transferase fusion protein fsoAthe cytochrome P450 monoxygenases fsoD and fsoE, and the acetyltransferase fsoF; the cytochrome P450 monooxygenase fsoB and the glucose oxidase-like protein fsoC do not seem to play a role in biosynthesis of fuscoatroside. Functionally, glucose oxidase; part of the gene cluster that mediates the biosynthesis of the enfumafungin-type antibiotic, fuscoatroside. This is Glucose oxidase-like protein fsoC from Humicola fuscoatra.